Here is a 273-residue protein sequence, read N- to C-terminus: Transmembrane protein 45A (273 aa).

The next 5 membrane-spanning stretches (helical) occupy residues 8-27, 55-79, 108-131, 153-171, and 217-236; these read ALPGSFFFAMGFWWTMKNIL, VVVLLMSLTGIAGEQFISGGPALIL, IICFTTNVLPLSSSKLMLSIAIFV, LLVFVGTFSGLVAFLEFLV, and MFLSMCFCWHYASILILIGV.

Belongs to the TMEM45 family.

It is found in the membrane. In Mus musculus (Mouse), this protein is Transmembrane protein 45A (Tmem45a).